We begin with the raw amino-acid sequence, 216 residues long: Imidazole glycerol phosphate synthase subunit HisH (216 aa).

The region spanning 2–216 (SVAIVDYGSG…LISNFLKWKP (215 aa)) is the Glutamine amidotransferase type-1 domain. C88 (nucleophile) is an active-site residue. Residues H196 and E198 contribute to the active site.

As to quaternary structure, heterodimer of HisH and HisF.

It localises to the cytoplasm. The enzyme catalyses 5-[(5-phospho-1-deoxy-D-ribulos-1-ylimino)methylamino]-1-(5-phospho-beta-D-ribosyl)imidazole-4-carboxamide + L-glutamine = D-erythro-1-(imidazol-4-yl)glycerol 3-phosphate + 5-amino-1-(5-phospho-beta-D-ribosyl)imidazole-4-carboxamide + L-glutamate + H(+). It carries out the reaction L-glutamine + H2O = L-glutamate + NH4(+). It participates in amino-acid biosynthesis; L-histidine biosynthesis; L-histidine from 5-phospho-alpha-D-ribose 1-diphosphate: step 5/9. IGPS catalyzes the conversion of PRFAR and glutamine to IGP, AICAR and glutamate. The HisH subunit catalyzes the hydrolysis of glutamine to glutamate and ammonia as part of the synthesis of IGP and AICAR. The resulting ammonia molecule is channeled to the active site of HisF. This Rhodopseudomonas palustris (strain ATCC BAA-98 / CGA009) protein is Imidazole glycerol phosphate synthase subunit HisH.